Reading from the N-terminus, the 224-residue chain is UPF0441 protein ECA0329 (224 aa).

The disordered stretch occupies residues 180 to 224 (TALAPKPATTSTITRGGFGETVAKQNSMQRSSASSNSSSSRSMGG). Low complexity predominate over residues 204–224 (QNSMQRSSASSNSSSSRSMGG).

The protein belongs to the UPF0441 family.

The sequence is that of UPF0441 protein ECA0329 from Pectobacterium atrosepticum (strain SCRI 1043 / ATCC BAA-672) (Erwinia carotovora subsp. atroseptica).